We begin with the raw amino-acid sequence, 312 residues long: Acetaldehyde dehydrogenase (312 aa).

12-15 (SGNV) provides a ligand contact to NAD(+). The Acyl-thioester intermediate role is filled by Cys-132. Residues 163–171 (SAGPGTRAN) and Asn-290 contribute to the NAD(+) site.

The protein belongs to the acetaldehyde dehydrogenase family.

The enzyme catalyses acetaldehyde + NAD(+) + CoA = acetyl-CoA + NADH + H(+). The polypeptide is Acetaldehyde dehydrogenase (cbzQ) (Pseudomonas putida (Arthrobacter siderocapsulatus)).